A 96-amino-acid chain; its full sequence is Small ribosomal subunit protein bS16m (96 aa).

The protein belongs to the bacterial ribosomal protein bS16 family. In terms of assembly, component of the mitochondrial small ribosomal subunit (mt-SSU). Mature yeast 74S mitochondrial ribosomes consist of a small (37S) and a large (54S) subunit. The 37S small subunit contains a 15S ribosomal RNA (15S mt-rRNA) and at least 32 different proteins. The 54S large subunit contains a 21S rRNA (21S mt-rRNA) and at least 45 different proteins.

It is found in the mitochondrion. Its function is as follows. Component of the mitochondrial ribosome (mitoribosome), a dedicated translation machinery responsible for the synthesis of mitochondrial genome-encoded proteins, including at least some of the essential transmembrane subunits of the mitochondrial respiratory chain. The mitoribosomes are attached to the mitochondrial inner membrane and translation products are cotranslationally integrated into the membrane. In Schizosaccharomyces pombe (strain 972 / ATCC 24843) (Fission yeast), this protein is Small ribosomal subunit protein bS16m (mrps16).